The primary structure comprises 475 residues: ATP synthase subunit beta (475 aa).

161–168 is a binding site for ATP; that stretch reads GGAGVGKT.

It belongs to the ATPase alpha/beta chains family. In terms of assembly, F-type ATPases have 2 components, CF(1) - the catalytic core - and CF(0) - the membrane proton channel. CF(1) has five subunits: alpha(3), beta(3), gamma(1), delta(1), epsilon(1). CF(0) has three main subunits: a(1), b(2) and c(9-12). The alpha and beta chains form an alternating ring which encloses part of the gamma chain. CF(1) is attached to CF(0) by a central stalk formed by the gamma and epsilon chains, while a peripheral stalk is formed by the delta and b chains.

It is found in the cell membrane. It catalyses the reaction ATP + H2O + 4 H(+)(in) = ADP + phosphate + 5 H(+)(out). Produces ATP from ADP in the presence of a proton gradient across the membrane. The catalytic sites are hosted primarily by the beta subunits. The protein is ATP synthase subunit beta of Mycoplasma mycoides subsp. mycoides SC (strain CCUG 32753 / NCTC 10114 / PG1).